We begin with the raw amino-acid sequence, 346 residues long: Centromere protein L (346 aa).

Serine 41 carries the phosphoserine modification. Position 45 is a phosphothreonine (threonine 45). Residue serine 55 is modified to Phosphoserine.

Belongs to the CENP-L/IML3 family. Component of the CENPA-CAD complex, composed of CENPI, CENPK, CENPL, CENPO, CENPP, CENPQ, CENPR and CENPS. The CENPA-CAD complex interacts with the CENPA-NAC complex, at least composed of CENPA, CENPC, CENPH, CENPM, CENPN, CENPT and CENPU.

It is found in the nucleus. The protein localises to the chromosome. It localises to the centromere. Component of the CENPA-CAD (nucleosome distal) complex, a complex recruited to centromeres which is involved in assembly of kinetochore proteins, mitotic progression and chromosome segregation. May be involved in incorporation of newly synthesized CENPA into centromeres via its interaction with the CENPA-NAC complex. The protein is Centromere protein L (CENPL) of Bos taurus (Bovine).